Reading from the N-terminus, the 89-residue chain is Dynein light chain (89 aa).

Belongs to the dynein light chain family. In terms of tissue distribution, tegument.

It is found in the cytoplasm. Its subcellular location is the cytoskeleton. Its function is as follows. Acts as a non-catalytic accessory component of a dynein complex. The polypeptide is Dynein light chain (DLC) (Schistosoma mansoni (Blood fluke)).